A 398-amino-acid polypeptide reads, in one-letter code: Phosphoglycerate kinase (398 aa).

Substrate is bound by residues 21 to 23 (DFN), Arg-36, 59 to 62 (HLGR), Arg-119, and Arg-157. Residues Lys-208, Gly-296, Glu-327, and 354 to 357 (GGDS) each bind ATP.

It belongs to the phosphoglycerate kinase family. Monomer.

It localises to the cytoplasm. The enzyme catalyses (2R)-3-phosphoglycerate + ATP = (2R)-3-phospho-glyceroyl phosphate + ADP. It functions in the pathway carbohydrate degradation; glycolysis; pyruvate from D-glyceraldehyde 3-phosphate: step 2/5. The polypeptide is Phosphoglycerate kinase (Streptococcus pneumoniae (strain Taiwan19F-14)).